The primary structure comprises 303 residues: Biphenyl-2,3-diol 1,2-dioxygenase (303 aa).

VOC domains are found at residues 5–119 and 143–264; these read SLGY…IYYG and GLGH…YGWS. Fe cation-binding residues include H146, H210, and E260. Residues 283–303 are disordered; that stretch reads WGHKSVRDKALRATKHEQQPE. A compositionally biased stretch (basic and acidic residues) spans 287 to 303; that stretch reads SVRDKALRATKHEQQPE.

The protein belongs to the extradiol ring-cleavage dioxygenase family. As to quaternary structure, homooctamer. It depends on Fe(2+) as a cofactor.

The catalysed reaction is biphenyl-2,3-diol + O2 = 2-hydroxy-6-oxo-6-phenylhexa-2,4-dienoate + H(+). Its pathway is xenobiotic degradation; biphenyl degradation; 2-hydroxy-2,4-pentadienoate and benzoate from biphenyl: step 3/4. The sequence is that of Biphenyl-2,3-diol 1,2-dioxygenase (bphC) from Metapseudomonas furukawaii (Pseudomonas furukawaii).